The chain runs to 126 residues: uncharacterized protein (126 aa).

Residues Met1 to Ala27 form the signal peptide. Residues Met93–Glu126 form a disordered region. Over residues Glu101–Glu126 the composition is skewed to basic and acidic residues.

This is an uncharacterized protein from Bacillus subtilis (strain 168).